A 162-amino-acid chain; its full sequence is Phosphopantetheine adenylyltransferase (162 aa).

Residue serine 9 coordinates substrate. ATP-binding positions include 9–10 and histidine 17; that span reads SF. Positions 41, 73, and 87 each coordinate substrate. ATP-binding positions include 88–90, glutamate 98, and 123–129; these read GLR and YAHLSSS.

Belongs to the bacterial CoaD family. In terms of assembly, homohexamer. It depends on Mg(2+) as a cofactor.

It is found in the cytoplasm. The enzyme catalyses (R)-4'-phosphopantetheine + ATP + H(+) = 3'-dephospho-CoA + diphosphate. Its pathway is cofactor biosynthesis; coenzyme A biosynthesis; CoA from (R)-pantothenate: step 4/5. Functionally, reversibly transfers an adenylyl group from ATP to 4'-phosphopantetheine, yielding dephospho-CoA (dPCoA) and pyrophosphate. This chain is Phosphopantetheine adenylyltransferase, found in Symbiobacterium thermophilum (strain DSM 24528 / JCM 14929 / IAM 14863 / T).